Consider the following 382-residue polypeptide: Intermediate transcription factor 3 large subunit (382 aa).

This sequence belongs to the poxviruses A23 family. Heterodimer of a 45 kDa and a 32 kDa subunit.

Acts with RNA polymerase to initiate transcription from intermediate gene promoters. This chain is Intermediate transcription factor 3 large subunit (VITF3L), found in Oryctolagus cuniculus (Rabbit).